The chain runs to 423 residues: Type II methyltransferase M.BamHI (423 aa).

Basic and acidic residues predominate over residues D397–N414. Residues D397 to E423 are disordered.

This sequence belongs to the N(4)/N(6)-methyltransferase family.

It carries out the reaction a 2'-deoxycytidine in DNA + S-adenosyl-L-methionine = an N(4)-methyl-2'-deoxycytidine in DNA + S-adenosyl-L-homocysteine + H(+). In terms of biological role, a beta subtype methylase, recognizes the double-stranded sequence 5'-GGATCC-3', methylates C-5 on both strands, and protects the DNA from cleavage by the BamHI endonuclease. This is Type II methyltransferase M.BamHI from Bacillus amyloliquefaciens (Bacillus velezensis).